A 532-amino-acid chain; its full sequence is Cytokinin dehydrogenase 8 (532 aa).

The first 26 residues, methionine 1–serine 26, serve as a signal peptide directing secretion. Positions valine 51–alanine 238 constitute an FAD-binding PCMH-type domain. 3 residues coordinate FAD: alanine 87, glycine 89, and glycine 91. A Pros-8alpha-FAD histidine modification is found at histidine 92. Residues serine 93, glutamine 97, aspartate 162, threonine 167, serine 173, isoleucine 177, and isoleucine 228 each coordinate FAD. N-linked (GlcNAc...) asparagine glycosylation is present at asparagine 420. The FAD site is built by tyrosine 482 and glutamine 520.

This sequence belongs to the oxygen-dependent FAD-linked oxidoreductase family. As to quaternary structure, monomer. It depends on FAD as a cofactor.

The protein localises to the secreted. The protein resides in the extracellular space. It carries out the reaction N(6)-dimethylallyladenine + A + H2O = 3-methyl-2-butenal + adenine + AH2. Functionally, catalyzes the oxidation of cytokinins, a family of N(6)-substituted adenine derivatives that are plant hormones, where the substituent is an isopentenyl group. This is Cytokinin dehydrogenase 8 (CKX8) from Oryza sativa subsp. indica (Rice).